Reading from the N-terminus, the 110-residue chain is Large ribosomal subunit protein uL22 (110 aa).

The protein belongs to the universal ribosomal protein uL22 family. In terms of assembly, part of the 50S ribosomal subunit.

In terms of biological role, this protein binds specifically to 23S rRNA; its binding is stimulated by other ribosomal proteins, e.g. L4, L17, and L20. It is important during the early stages of 50S assembly. It makes multiple contacts with different domains of the 23S rRNA in the assembled 50S subunit and ribosome. Functionally, the globular domain of the protein is located near the polypeptide exit tunnel on the outside of the subunit, while an extended beta-hairpin is found that lines the wall of the exit tunnel in the center of the 70S ribosome. The protein is Large ribosomal subunit protein uL22 of Colwellia psychrerythraea (strain 34H / ATCC BAA-681) (Vibrio psychroerythus).